A 269-amino-acid polypeptide reads, in one-letter code: Formamidopyrimidine-DNA glycosylase (269 aa).

Proline 2 (schiff-base intermediate with DNA) is an active-site residue. Residue glutamate 3 is the Proton donor of the active site. The Proton donor; for beta-elimination activity role is filled by lysine 57. Residues histidine 90, arginine 109, and lysine 150 each contribute to the DNA site. The FPG-type zinc-finger motif lies at 235 to 269; that stretch reads QVYGKGGKPCPRCDNPLSEMKIGQRASVFCSECQK. Arginine 259 acts as the Proton donor; for delta-elimination activity in catalysis.

This sequence belongs to the FPG family. As to quaternary structure, monomer. Requires Zn(2+) as cofactor.

The enzyme catalyses Hydrolysis of DNA containing ring-opened 7-methylguanine residues, releasing 2,6-diamino-4-hydroxy-5-(N-methyl)formamidopyrimidine.. It carries out the reaction 2'-deoxyribonucleotide-(2'-deoxyribose 5'-phosphate)-2'-deoxyribonucleotide-DNA = a 3'-end 2'-deoxyribonucleotide-(2,3-dehydro-2,3-deoxyribose 5'-phosphate)-DNA + a 5'-end 5'-phospho-2'-deoxyribonucleoside-DNA + H(+). Involved in base excision repair of DNA damaged by oxidation or by mutagenic agents. Acts as a DNA glycosylase that recognizes and removes damaged bases. Has a preference for oxidized purines, such as 7,8-dihydro-8-oxoguanine (8-oxoG). Has AP (apurinic/apyrimidinic) lyase activity and introduces nicks in the DNA strand. Cleaves the DNA backbone by beta-delta elimination to generate a single-strand break at the site of the removed base with both 3'- and 5'-phosphates. This is Formamidopyrimidine-DNA glycosylase from Photobacterium profundum (strain SS9).